We begin with the raw amino-acid sequence, 648 residues long: Solute carrier family 23 member 2 (648 aa).

The segment at 1 to 21 (MMGIGKNTASKSVEAGGSTEG) is disordered. Over 9–110 (ASKSVEAGGS…LCIFLGLQHY (102 aa)) the chain is Cytoplasmic. The residue at position 70 (S70) is a Phosphoserine. The residue at position 75 (T75) is a Phosphothreonine. S78 is modified (phosphoserine). T79 is modified (phosphothreonine). A Phosphoserine modification is found at S81. Residues 111–131 (LTCFSGTIAVPFLLADAMCVG) form a helical membrane-spanning segment. At 132–139 (DDQWATSQ) the chain is on the extracellular side. A helical membrane pass occupies residues 140–160 (LIGTIFFCVGITTLLQTTFGC). R161 is a topological domain (cytoplasmic). The helical transmembrane segment at 162–182 (LPLFQASAFAFLAPARAILSL) threads the bilayer. Residues 183 to 216 (DKWKCNTTEITVANGTAELLEHIWHPRIQEIQGA) lie on the Extracellular side of the membrane. 2 N-linked (GlcNAc...) asparagine glycosylation sites follow: N188 and N196. A helical membrane pass occupies residues 217 to 237 (IIMSSLIEVVIGLLGLPGALL). Over 238–264 (RYIGPLTITPTVALIGLSGFQAAGERA) the chain is Cytoplasmic. The chain crosses the membrane as a helical span at residues 265–282 (GKHWGIAMLTIFLVLLFS). Residues 283–286 (QYAR) are Extracellular-facing. Residues 287 to 300 (NVKFPLPIYKSKKG) constitute an intramembrane region (helical). Residues 301–307 (WTAYKFQ) lie on the Extracellular side of the membrane. A helical transmembrane segment spans residues 308–328 (LFKMFPIILAILVSWLLCFIF). Residues 329–369 (TVTDVFPSNSTDYGYYARTDARKGVLLVAPWFKVPYPFQWG) lie on the Cytoplasmic side of the membrane. The chain crosses the membrane as a helical span at residues 370–390 (MPTVSAAGVIGMLSAVVASII). The Extracellular segment spans residues 391 to 415 (ESIGDYYACARLSCAPPPPIHAINR). The chain crosses the membrane as a helical span at residues 416 to 436 (GIFVEGLSCVLDGIFGTGNGS). The Cytoplasmic portion of the chain corresponds to 437–459 (TSSSPNIGVLGITKVGSRRVIQY). Residues 460 to 480 (GAALMLGLGMVGKFSALFASL) traverse the membrane as a helical segment. The Extracellular portion of the chain corresponds to 481–483 (PDP). Residues 484–504 (VLGALFCTLFGMITAVGLSNL) form a helical membrane-spanning segment. Topologically, residues 505–514 (QFIDLNSSRN) are cytoplasmic. A helical membrane pass occupies residues 515-535 (LFVLGFSIFFGLVLPSYLRQN). The Extracellular portion of the chain corresponds to 536–545 (PLVTGITGID). The chain crosses the membrane as a helical span at residues 546 to 566 (QILNVLLTTAMFVGGCVAFIL). At 567–648 (DNTIPGTPEE…SSDKDSQATV (82 aa)) the chain is on the cytoplasmic side. Phosphothreonine is present on T647.

The protein belongs to the nucleobase:cation symporter-2 (NCS2) (TC 2.A.40) family. As to quaternary structure, interacts with CLSTN3. Phosphorylated. As to expression, expressed in metabolically active and specialized tissues, including high expression in brain and adrenals. Detected in a wide range of tissues. Expression in kidney is almost undetectable.

The protein resides in the cell membrane. The enzyme catalyses L-ascorbate(out) + 2 Na(+)(out) = L-ascorbate(in) + 2 Na(+)(in). Functionally, sodium/ascorbate cotransporter. Mediates electrogenic uptake of vitamin C, with a stoichiometry of 2 Na(+) for each ascorbate. The protein is Solute carrier family 23 member 2 (Slc23a2) of Mus musculus (Mouse).